The following is a 171-amino-acid chain: MPRSQRNDNFIDKTFTVVADILLKVLPTTRREKEAFTYYRDGMSAQAEGEYAEALQNYYEAMRLEVDAYDRSYILYNIGLIHTSNGEHAKALEYYYQALERNPYLPQALNNIAVIYHYRGEQAIESGNSRISNLLFDKAADYWKEAIRLAPTNYIEAQNWLKITNRLEEAI.

TPR repeat units follow at residues alanine 35 to alanine 68, serine 72 to leucine 105, and glycine 120 to asparagine 153.

This sequence belongs to the Ycf3 family.

The protein resides in the plastid. Its subcellular location is the chloroplast thylakoid membrane. Its function is as follows. Essential for the assembly of the photosystem I (PSI) complex. May act as a chaperone-like factor to guide the assembly of the PSI subunits. This chain is Photosystem I assembly protein Ycf3, found in Nephroselmis olivacea (Green alga).